The sequence spans 292 residues: Elongation factor Ts (292 aa).

The segment at 79–82 (TDFV) is involved in Mg(2+) ion dislocation from EF-Tu.

The protein belongs to the EF-Ts family.

It is found in the cytoplasm. Associates with the EF-Tu.GDP complex and induces the exchange of GDP to GTP. It remains bound to the aminoacyl-tRNA.EF-Tu.GTP complex up to the GTP hydrolysis stage on the ribosome. This is Elongation factor Ts from Staphylococcus epidermidis (strain ATCC 12228 / FDA PCI 1200).